The chain runs to 186 residues: ATP synthase subunit b' (186 aa).

Residues 39 to 59 traverse the membrane as a helical segment; that stretch reads IFWLLLALGAIYWLLKNIAIP.

This sequence belongs to the ATPase B chain family. In terms of assembly, F-type ATPases have 2 components, F(1) - the catalytic core - and F(0) - the membrane proton channel. F(1) has five subunits: alpha(3), beta(3), gamma(1), delta(1), epsilon(1). F(0) has four main subunits: a(1), b(1), b'(1) and c(10-14). The alpha and beta chains form an alternating ring which encloses part of the gamma chain. F(1) is attached to F(0) by a central stalk formed by the gamma and epsilon chains, while a peripheral stalk is formed by the delta, b and b' chains.

It localises to the cellular chromatophore membrane. Its function is as follows. F(1)F(0) ATP synthase produces ATP from ADP in the presence of a proton or sodium gradient. F-type ATPases consist of two structural domains, F(1) containing the extramembraneous catalytic core and F(0) containing the membrane proton channel, linked together by a central stalk and a peripheral stalk. During catalysis, ATP synthesis in the catalytic domain of F(1) is coupled via a rotary mechanism of the central stalk subunits to proton translocation. Functionally, component of the F(0) channel, it forms part of the peripheral stalk, linking F(1) to F(0). The b'-subunit is a diverged and duplicated form of b found in plants and photosynthetic bacteria. This Rhodobacter capsulatus (Rhodopseudomonas capsulata) protein is ATP synthase subunit b'.